The sequence spans 430 residues: Glutamate-1-semialdehyde 2,1-aminomutase (430 aa).

Lys-265 is subject to N6-(pyridoxal phosphate)lysine.

Belongs to the class-III pyridoxal-phosphate-dependent aminotransferase family. HemL subfamily. Homodimer. Requires pyridoxal 5'-phosphate as cofactor.

It is found in the cytoplasm. The catalysed reaction is (S)-4-amino-5-oxopentanoate = 5-aminolevulinate. It participates in porphyrin-containing compound metabolism; protoporphyrin-IX biosynthesis; 5-aminolevulinate from L-glutamyl-tRNA(Glu): step 2/2. The sequence is that of Glutamate-1-semialdehyde 2,1-aminomutase from Shewanella baltica (strain OS195).